The chain runs to 1203 residues: uncharacterized protein (1203 aa).

This is an uncharacterized protein from Magallana gigas (Pacific oyster).